The primary structure comprises 565 residues: Carboxylesterase 1D (565 aa).

An N-terminal signal peptide occupies residues 1 to 18 (MGLYPLIWLSLAACTAWG). A glycan (N-linked (GlcNAc...) asparagine) is linked at Asn79. The cysteines at positions 87 and 116 are disulfide-linked. Ser221 acts as the Acyl-ester intermediate in catalysis. Cys273 and Cys284 are joined by a disulfide. The Charge relay system role is filled by Glu353. Lys382 bears the N6-succinyllysine mark. His466 serves as the catalytic Charge relay system. Asn489 is a glycosylation site (N-linked (GlcNAc...) asparagine). The short motif at 562–565 (HVEL) is the Prevents secretion from ER element.

It belongs to the type-B carboxylesterase/lipase family. In terms of assembly, homotrimer. As to expression, highest expression occurs in liver with lower levels in adipose tissue, kidney, heart, intestine, lung, testis and thymus.

It localises to the endoplasmic reticulum lumen. Its subcellular location is the cytoplasm. The protein localises to the cytosol. It is found in the lipid droplet. The protein resides in the microsome. It carries out the reaction a carboxylic ester + H2O = an alcohol + a carboxylate + H(+). The enzyme catalyses a long-chain fatty acyl ethyl ester + H2O = a long-chain fatty acid + ethanol + H(+). The catalysed reaction is all-trans-retinyl hexadecanoate + H2O = all-trans-retinol + hexadecanoate + H(+). Its function is as follows. Major lipase in white adipose tissue. Involved in the metabolism of xenobiotics and of natural substrates. Hydrolyzes triacylglycerols and monoacylglycerols, with a preference for monoacylglycerols. The susceptibility of the substrate increases with decreasing acyl chain length of the fatty acid moiety. Catalyzes the synthesis of fatty acid ethyl esters. Hydrolyzes retinyl esters. This is Carboxylesterase 1D from Mus musculus (Mouse).